The following is a 102-amino-acid chain: Glutaredoxin-C13 (102 aa).

Residues 1-101 (MDKVMRMSSE…PLIKPYQSIL (101 aa)) form the Glutaredoxin domain. Residues C21 and C24 are joined by a disulfide bond.

It belongs to the glutaredoxin family. CC-type subfamily.

The protein localises to the cytoplasm. Functionally, has a glutathione-disulfide oxidoreductase activity in the presence of NADPH and glutathione reductase. Reduces low molecular weight disulfides and proteins. The chain is Glutaredoxin-C13 (GRXC13) from Arabidopsis thaliana (Mouse-ear cress).